Reading from the N-terminus, the 243-residue chain is Adenosylcobinamide-GDP ribazoletransferase (243 aa).

6 helical membrane passes run 33–53, 59–79, 105–125, 127–147, 172–192, and 223–243; these read FLPV…LLAP, IIIV…HIDG, IGAF…TLAY, TENM…VFAA, VISI…GAII, and TIEI…SIII.

Belongs to the CobS family. Mg(2+) serves as cofactor.

The protein resides in the cell membrane. It catalyses the reaction alpha-ribazole + adenosylcob(III)inamide-GDP = adenosylcob(III)alamin + GMP + H(+). It carries out the reaction alpha-ribazole 5'-phosphate + adenosylcob(III)inamide-GDP = adenosylcob(III)alamin 5'-phosphate + GMP + H(+). It participates in cofactor biosynthesis; adenosylcobalamin biosynthesis; adenosylcobalamin from cob(II)yrinate a,c-diamide: step 7/7. In terms of biological role, joins adenosylcobinamide-GDP and alpha-ribazole to generate adenosylcobalamin (Ado-cobalamin). Also synthesizes adenosylcobalamin 5'-phosphate from adenosylcobinamide-GDP and alpha-ribazole 5'-phosphate. The chain is Adenosylcobinamide-GDP ribazoletransferase from Alkaliphilus oremlandii (strain OhILAs) (Clostridium oremlandii (strain OhILAs)).